A 284-amino-acid chain; its full sequence is Parvulin-like PPIase (284 aa).

An N-terminal signal peptide occupies residues 1–20 (MKKLSIVLLSVSMLSSIAFA). The PpiC domain occupies 139 to 232 (KEQIKVAHIL…YGWHIIKVLE (94 aa)).

This sequence belongs to the PpiC/parvulin rotamase family.

It is found in the cell outer membrane. It catalyses the reaction [protein]-peptidylproline (omega=180) = [protein]-peptidylproline (omega=0). The polypeptide is Parvulin-like PPIase (plp) (Rickettsia bellii (strain RML369-C)).